The chain runs to 95 residues: uncharacterized protein (95 aa).

Belongs to the inositol monophosphatase superfamily.

This is an uncharacterized protein from Rhizobium leguminosarum bv. phaseoli.